The primary structure comprises 1960 residues: MFGGAKPSFGATPAATSFGGFSGTTTTTPFGQSAFGKPAAPAFGNTSTFAAQPAQQSLFGAAATPAQPAGGLFGANTSTGFGSTATAQPTAFGAFSQPQQTSNIFGSTQTAASTSLFGQSTLPAFGAAKPTMTAFGQTAAAQPTGSLFGQPAAATSTTGFGGFGTSAPTTTNVFGSGTASAFAQPQATAVGASGVNTGTAVAKYQPTIGTDTLMKSGQANSVNTKQHCITAMKEFEGKSLEELRLEDYMCGRKGPQAGNAPGAFGFGAQVTQPAQPASGGLFGSTAQPSTGLFGQTVTENKSMFGTTAFGQQPATNNAFGAATQQNNFLQKPFGATTTTPFAAPAADASNPFGAKPAFGQGGSLFGQAPATSAAPAFGQTNTGFGGFGTTAGATQQSTLFGATPAADPNKSAFGLGTAASAATTGFGFGAPATSTAGGGLFGNKPATSFAAPTFGATSTASTPFSNFGLNTSTAATGGGLFNSGLNKPATSGFGGFGATSAAPLNFNAGNTGGSLFGNTAKPGGGLFGGGTTTLGGTGAAPTGGLFGGGTTSFGGVGGSLGGGGFGMGTNNSLTGGIMGAQPTLGIMTPSHQPIHQQILARVTSPYGDSPIFKDLKLSSEADATRATNPAAQQAVLDLTSNQYKISTSNNPAPMKVKALGSTLNRKSLFDGLEEFDASVEGFNLKPSAKRLVIKPKVKSVEGGNPSSSIGSAPNTPQSRPKGATPNKERESFSGAIPSEPLPPAGNSPGATNGRESQDNGRRESWLHPNNLEKVRQHNIQTGMDQGSPHNSTLNELVPRKPLDTYRPSSTVRLSVSTIPENPFEDQSSTIARRETFTSQQANESVLSNRSNEAEDSAANQSRLAIEAAAAEAADDESHPTGIVLRRVGYYTIPSLDDLRSYLAEDGSCVVPNFTVGREGYGNVFFGKEMDVAGLNLDEIVHFRNKEIIIYPDDENKPPIGQGLNRDAQVTLDQVWPLDKTKHEAIKDPQRLLEMDWEGKLRRVCDKNDTRFIEYRPETGSWVFRVKHFSKYGLGDSDEEDELPTDPKKAKIATLEAQQRANAEKMTLNSLRQAQKISEDAARNLDPKALVAGVASGFRPMDDTAEFLLMDKTQFFQAGGNSDFSMFDPPRQRPTITSPTAVLAQEMVGNEAHKMQLMKSSFFVEDNAPEDEPMETTGRLLRHRKFFNVEPLVWKDGASESSSQYDFEHPSPALPISSSVSEASLMCDAHYEETSSMATGSIVAAVKETKFEMPVTKAFKFVCKPKVAPIKLRATTVPLPRSIAYEMRDNWIADLGFYKGRSFKLSFGPQNSLVLPSTYNNMQNLKEFTGPSLPVSMVFAPRSATDLSPSVMQLVEFNMVKGNEGFRESIIPHLEVQLNDCLSVNVEGSECPCIHPDSGTKLVSKHFSESLKQRNAGLKEDYSVSVWSLLFALWGDHDELVDLEKNSHYMVMCRRNLLSEWLENTLLGKDLLSKKVSTHSYLEHMLDLLSCHRVNEACELAFSYDDANLALVLSQLSSGAVFRLLMEEQLFAWQQSKSDKYIDLERLKMYMLAAGAPMMQSSHGAINLLENKNWLTALALQLWYFTAPTSSITDALNAYNDAFQAEECYAEPPKPSYRDAPTDTKKPVYDLRYHLLQLHSKRMHSLEETLNPITHTADAMDFRLSWLLLQTLRALGYRHCSPLTEARLSVDFASQLENEGLWQWGIFVLLHIKQQTQRERAVQQMLQRNVSVSAKVALYAEERFIVEELGIPMSWVDYAKAVKAGASGKHHLQAKYLLKAKHFATAHDVIFQHIAPDAIINGKMKYLHSLLIQFEDTEGSSIRVPNWANQGQIFLDFIDISAKFKQIRSVTNIADINARWENLKPQLSELCSRISLLPCPTSKHRLCQSEISQSLSCLVHGMCIVCPEMESSTVLKVALERLPLPQEFASKELRIWLEELLDKIQNEPPFSERQQPTMMEI.

46 consecutive repeat copies span residues 2–3 (FG), 9–10 (FG), 18–19 (FG), 30–31 (FG), 35–36 (FG), 43–44 (FG), 59–60 (FG), 73–74 (FG), 81–82 (FG), 92–93 (FG), 105–106 (FG), 117–118 (FG), 125–126 (FG), 135–136 (FG), 148–149 (FG), 160–161 (FG), 163–164 (FG), 174–175 (FG), 264–265 (FG), 266–267 (FG), 282–283 (FG), 293–294 (FG), 304–305 (FG), 309–310 (FG), 319–320 (FG), 333–334 (FG), 352–353 (FG), 358–359 (FG), 365–366 (FG), 377–378 (FG), 384–385 (FG), 387–388 (FG), 400–401 (FG), 413–414 (FG), 426–427 (FG), 428–429 (FG), 441–442 (FG), 454–455 (FG), 467–468 (FG), 493–494 (FG), 496–497 (FG), 516–517 (FG), 527–528 (FG), 546–547 (FG), 553–554 (FG), and 565–566 (FG). Positions 2–566 (FGGAKPSFGA…GGSLGGGGFG (565 aa)) are 46 X 2 AA repeats of F-G. Disordered regions lie at residues 698–768 (KSVE…WLHP) and 781–860 (TGMD…AANQ). The span at 704 to 718 (NPSSSIGSAPNTPQS) shows a compositional bias: polar residues. The segment covering 755–768 (ESQDNGRRESWLHP) has biased composition (basic and acidic residues). Composition is skewed to polar residues over residues 781–794 (TGMDQGSPHNSTLN) and 806–850 (RPSS…SNRS). The Peptidase S59 domain occupies 886–1028 (RVGYYTIPSL…GSWVFRVKHF (143 aa)). Catalysis depends on S1029, which acts as the Nucleophile.

It belongs to the nucleoporin GLFG family. Part of the nuclear pore complex (NPC). Interacts with Rae1. Nuclear pore complex protein Nup98: Interacts with pzg and Chro. Interacts with MBD-R2; the interaction allows Nup98 recruitment to chromatin. Interacts with Trx. Interacts with Wds. Interacts with Mgtor and Cp190. Upon ecdysone stimulation, interacts with EcR, CTCF, su(Hw) and Trl. Post-translationally, isoform A and isoform C are autoproteolytically cleaved to yield Nup98 and Nup96 or Nup98 only, respectively. Expressed in brain.

It localises to the chromosome. It is found in the nucleus. Its subcellular location is the nucleoplasm. The protein resides in the nucleus membrane. The protein localises to the nuclear pore complex. Functionally, part of the nuclear pore complex (NPC). Required for MAD import as part of the Nup107-160 complex and required for nuclear export of Moe probably via its association with Rae1. Plays a role in nuclear mRNA export. Promotes cell antiviral response by up-regulating FoxK-dependent antiviral gene transcription. In germline stem cells, involved in their maintenance and division together with the TGF-Beta and EGFR signaling pathways. In larval lymph glands, has a role in the maintenance of hematopoiesis by regulating Pvr expression. In terms of biological role, part of the nuclear pore complex (NPC). In the nucleoplasm, binds to transcriptionally active chromatin with a preference for regulatory regions; co-localizes with RNA polymerase II in a RNA-independent manner and before transition into transcription elongation. Plays a role in the transcriptional memory process by stabilizing enhancer-promoter loops and by mediating anchoring of chromatin to the nuclear pore complex region. During larval development, interacts with trx and MBD-R2 and regulates transcription of developmental genes including ecdysone-responsive genes such as Eip74 and E23. Its function is as follows. Part of the nuclear pore complex (NPC). This Drosophila melanogaster (Fruit fly) protein is Nuclear pore complex protein Nup98-Nup96.